The following is a 126-amino-acid chain: Sperm-specific H1/protamine-like protein type 2 (126 aa).

The region spanning 5–84 (KKPTTLSMIV…GATGSFRVGK (80 aa)) is the H15 domain. The segment at 74 to 126 (SGATGSFRVGKAPASPKKAKKAKSPKKKSSKKSKNKSNNAKAKKSPKKKADSN) is disordered. Basic residues predominate over residues 90–120 (KKAKKAKSPKKKSSKKSKNKSNNAKAKKSPK).

Post-translationally, OE2 and OE3 are produced by post-translational cleavage of a common precursor. Sperm.

Its subcellular location is the nucleus. The protein localises to the chromosome. Functionally, linker histones are implicated in chromatin remodeling and/or transcriptional regulation during spermiogenesis, the process of spermatid maturation into spermatozoa. Protamines substitute for histones in the chromatin of sperm during the haploid phase of spermatogenesis. They compact sperm DNA into a highly condensed, stable and inactive complex. In Ostrea edulis (Native oyster), this protein is Sperm-specific H1/protamine-like protein type 2.